The sequence spans 218 residues: Oxygen regulatory protein NreC (218 aa).

The Response regulatory domain maps to 2 to 119; the sequence is KIVIADDHAV…QLILAVRTVY (118 aa). 4-aspartylphosphate is present on Asp53. An HTH luxR-type domain is found at 149–214; it reads SSDPFKILSK…ELVEYALKKK (66 aa). Residues 173–192 constitute a DNA-binding region (H-T-H motif); that stretch reads NKDIAEKLFVSVKTVEAHKT.

In terms of processing, phosphorylated by NreB.

The protein resides in the cytoplasm. In terms of biological role, member of the two-component regulatory system NreB/NreC involved in the control of dissimilatory nitrate/nitrite reduction in response to oxygen. Phosphorylated NreC binds to a GC-rich palindromic sequence at the promoters of the nitrate (narGHJI) and nitrite (nir) reductase operons, as well as the putative nitrate transporter gene narT, and activates their expression. The sequence is that of Oxygen regulatory protein NreC (nreC) from Staphylococcus epidermidis (strain ATCC 12228 / FDA PCI 1200).